A 169-amino-acid polypeptide reads, in one-letter code: Regulator of sigma D (169 aa).

Belongs to the Rsd/AlgQ family. As to quaternary structure, interacts with RpoD.

It localises to the cytoplasm. Functionally, binds RpoD and negatively regulates RpoD-mediated transcription activation by preventing the interaction between the primary sigma factor RpoD with the catalytic core of the RNA polymerase and with promoter DNA. May be involved in replacement of the RNA polymerase sigma subunit from RpoD to RpoS during the transition from exponential growth to the stationary phase. The chain is Regulator of sigma D from Yersinia pseudotuberculosis serotype O:1b (strain IP 31758).